The chain runs to 440 residues: Protein TENP (440 aa).

As to expression, expressed in developing retina and brain, but not in heart, liver or kidney. In brain, located in a narrow strip in the boundary between the ventricular zone (consisting of proliferating cells) and the intermediate zone (consisting of postmitotic, differentiating cells). Expressed in all major regions of the developing brain, including the myelencephalon, the mesencephalon, the telencephalon and the diencephalon. In the developing retina, expression is scattered across the retinal neural epithelium. Expressed in egg white (at protein level). Expressed in the magnum of the oviduct (at protein level).

Functionally, may play a role in the developmental transition from cell proliferation to cell differentiation during neurogenesis. The chain is Protein TENP (TENP) from Gallus gallus (Chicken).